A 385-amino-acid chain; its full sequence is 1-deoxy-D-xylulose 5-phosphate reductoisomerase (385 aa).

NADPH-binding residues include threonine 10, glycine 11, serine 12, isoleucine 13, glycine 36, asparagine 38, and asparagine 121. Residue lysine 122 participates in 1-deoxy-D-xylulose 5-phosphate binding. Position 123 (glutamate 123) interacts with NADPH. Position 147 (aspartate 147) interacts with Mn(2+). Residues serine 148, glutamate 149, serine 173, and histidine 196 each coordinate 1-deoxy-D-xylulose 5-phosphate. Glutamate 149 contributes to the Mn(2+) binding site. Residue glycine 202 participates in NADPH binding. Residues serine 209, asparagine 214, lysine 215, and glutamate 218 each contribute to the 1-deoxy-D-xylulose 5-phosphate site. Glutamate 218 serves as a coordination point for Mn(2+).

It belongs to the DXR family. Mg(2+) serves as cofactor. It depends on Mn(2+) as a cofactor.

It catalyses the reaction 2-C-methyl-D-erythritol 4-phosphate + NADP(+) = 1-deoxy-D-xylulose 5-phosphate + NADPH + H(+). It functions in the pathway isoprenoid biosynthesis; isopentenyl diphosphate biosynthesis via DXP pathway; isopentenyl diphosphate from 1-deoxy-D-xylulose 5-phosphate: step 1/6. In terms of biological role, catalyzes the NADPH-dependent rearrangement and reduction of 1-deoxy-D-xylulose-5-phosphate (DXP) to 2-C-methyl-D-erythritol 4-phosphate (MEP). This Exiguobacterium sp. (strain ATCC BAA-1283 / AT1b) protein is 1-deoxy-D-xylulose 5-phosphate reductoisomerase.